The primary structure comprises 590 residues: Melanophilin (590 aa).

One can recognise a RabBD domain in the interval 4 to 124 (RLDLSTLTDE…IGSLEWYYQH (121 aa)). An FYVE-type zinc finger spans residues 64–107 (CARCLQPYRLLLNSRRQCLECSLFVCKSCSHAHPEEQGWLCDPC). 5 disordered regions span residues 147 to 182 (GGGG…PLNS), 215 to 276 (SVPE…AELD), 311 to 335 (DTSD…ARTV), 361 to 472 (VLPP…SEIS), and 485 to 590 (GLTV…AQQP). Residues 154–172 (SLEEGNGDSEQTDEDGDLD) are compositionally biased toward acidic residues. A compositionally biased stretch (polar residues) spans 215 to 238 (SVPESAHSLQSLSGEPYSEDTTSL). Residues 339-485 (QILELNKRMS…SRIAALRAAG (147 aa)) are a coiled coil. A compositionally biased stretch (low complexity) spans 391–401 (LTSNISGSSTS). Over residues 424-433 (GHMETQERNP) the composition is skewed to basic and acidic residues.

Binds RAB27A that has been activated by GTP-binding via its N-terminus. Binds MYO5A via its C-terminal coiled coil domain. In terms of tissue distribution, highly expressed in embryos at day 7; not detectable at day 11. Highly expressed in adult stomach; detected at lower levels in kidney, lung, skin and small intestine. Detected in melanocytes.

The protein resides in the melanosome. Functionally, rab effector protein involved in melanosome transport. Serves as link between melanosome-bound RAB27A and the motor protein MYO5A. The protein is Melanophilin (Mlph) of Mus musculus (Mouse).